Reading from the N-terminus, the 368-residue chain is Ferredoxin--NADP reductase (368 aa).

FAD is bound by residues aspartate 56, glutamine 64, tyrosine 69, valine 109, phenylalanine 144, aspartate 310, and threonine 351.

Belongs to the ferredoxin--NADP reductase type 2 family. As to quaternary structure, homodimer. The cofactor is FAD.

The enzyme catalyses 2 reduced [2Fe-2S]-[ferredoxin] + NADP(+) + H(+) = 2 oxidized [2Fe-2S]-[ferredoxin] + NADPH. In Leptothrix cholodnii (strain ATCC 51168 / LMG 8142 / SP-6) (Leptothrix discophora (strain SP-6)), this protein is Ferredoxin--NADP reductase.